A 107-amino-acid chain; its full sequence is Nucleoid-associated protein RF_1365 (107 aa).

This sequence belongs to the YbaB/EbfC family. As to quaternary structure, homodimer.

It localises to the cytoplasm. The protein resides in the nucleoid. Binds to DNA and alters its conformation. May be involved in regulation of gene expression, nucleoid organization and DNA protection. This Rickettsia felis (strain ATCC VR-1525 / URRWXCal2) (Rickettsia azadi) protein is Nucleoid-associated protein RF_1365.